The primary structure comprises 276 residues: Undecaprenyl-diphosphatase 2 (276 aa).

The next 8 helical transmembrane spans lie at 1–21 (MSLW…LFPV), 44–64 (QLLP…LWYF), 87–107 (GHLM…GLLL), 114–134 (VFHD…LLWL), 150–170 (MTFK…IPGF), 190–210 (AAEF…VLEL), 222–242 (DALL…RFLM), and 251–271 (LASF…WFML).

Belongs to the UppP family.

The protein resides in the cell inner membrane. It catalyses the reaction di-trans,octa-cis-undecaprenyl diphosphate + H2O = di-trans,octa-cis-undecaprenyl phosphate + phosphate + H(+). Catalyzes the dephosphorylation of undecaprenyl diphosphate (UPP). Confers resistance to bacitracin. The sequence is that of Undecaprenyl-diphosphatase 2 from Burkholderia lata (strain ATCC 17760 / DSM 23089 / LMG 22485 / NCIMB 9086 / R18194 / 383).